Reading from the N-terminus, the 435-residue chain is Transcription factor gkaF (435 aa).

Residues 1–19 show a composition bias toward basic and acidic residues; it reads MGRPQRGDTAKERRERQDK. 3 disordered regions span residues 1–40, 115–158, and 231–257; these read MGRPQRGDTAKERRERQDKVTSPPESGPISQSGLSDTVDW, STTA…SSQS, and FSSESASPHVNRPPIQQQQSPSRFLAP. Over residues 28-40 the composition is skewed to polar residues; that stretch reads PISQSGLSDTVDW. A compositionally biased stretch (low complexity) spans 143–158; the sequence is SQSSDSSKPSSTSSQS.

The protein localises to the nucleus. In terms of biological role, transcription factor; part of the gene cluster that mediates the biosynthesis of GKK1032, fungal natural products containing a macrocyclic para-cyclophane connected to a decahydrofluorene ring system that show potent antitumor activities. This Penicillium citrinum protein is Transcription factor gkaF.